Reading from the N-terminus, the 220-residue chain is Large ribosomal subunit protein uL3 (220 aa).

Residues 113-143 form a disordered region; that stretch reads GTTKGHGYQGNIHKDGQRRGPMAHGSRYHRR.

It belongs to the universal ribosomal protein uL3 family. As to quaternary structure, part of the 50S ribosomal subunit. Forms a cluster with proteins L14 and L19.

One of the primary rRNA binding proteins, it binds directly near the 3'-end of the 23S rRNA, where it nucleates assembly of the 50S subunit. This Limosilactobacillus fermentum (strain NBRC 3956 / LMG 18251) (Lactobacillus fermentum) protein is Large ribosomal subunit protein uL3.